A 390-amino-acid chain; its full sequence is MSFFGSEVARPRLFFRGLLGQAGPILITGGRAVADYREAFVGIDVAKLKNAIAVAESGRNGEVRYWGEVEASDAGIRRAIKQITAKFEHVYFCYEAGPTGYGLYRLIRSLGHECIVVAPSLIPRKPGDRVKTNRRDAISLARLLRAGELTAVWVPDEDHEAMRDLVRARTSAVETLRTHRQQVNAFMLKHGRIYPGKRSWTMRYLRWLQEQHFDHPAHQIALQEMVETVIAEFVPHWSLAAVVCALRALRGVDLIAAVTFATEVGDAGRFESPRQLMGYLGLVPGERSTGETTKRIGITKAGNSRVRTLLVECAWTYRYPPRIGKRKLYRLEEVSSSVREIAWKAQTRLTARYRMLSARGKKSTVVCTAVARELAGFMWAIAREARQTTS.

It belongs to the transposase IS1111A/IS1328/IS1533 family.

This is Putative transposase y4qE from Sinorhizobium fredii (strain NBRC 101917 / NGR234).